The following is a 48-amino-acid chain: MAERKGSISGLTDDEAQEFHKFWVQGFVGFTAVAVVAHFLVWVWRPWL.

At 2–21 (AERKGSISGLTDDEAQEFHK) the chain is on the cytoplasmic side. Residues His-20 and His-38 each contribute to the a bacteriochlorophyll site. A helical membrane pass occupies residues 22–44 (FWVQGFVGFTAVAVVAHFLVWVW). At 45–48 (RPWL) the chain is on the periplasmic side.

An alpha/beta heterodimer. The core complex is formed by different alpha and beta chains, binding bacteriochlorophyll molecules, and arranged most probably in tetrameric structures disposed around the reaction center. The non-pigmented gamma chains may constitute additional components.

Its subcellular location is the cell inner membrane. Its function is as follows. Antenna complexes are light-harvesting systems, which transfer the excitation energy to the reaction centers. This is Light-harvesting protein B-870 beta chain (pufB) from Rubrivivax gelatinosus (Rhodocyclus gelatinosus).